A 531-amino-acid chain; its full sequence is CTP synthase (531 aa).

An amidoligase domain region spans residues 1 to 264; the sequence is MPKFVVVTGG…GDFLVERLRL (264 aa). Ser13 is a binding site for CTP. Residue Ser13 participates in UTP binding. 14 to 19 contacts ATP; it reads GLGKGV. Tyr54 contributes to the L-glutamine binding site. Asp71 provides a ligand contact to ATP. Asp71 and Glu139 together coordinate Mg(2+). Residues 146-148, 185-190, and Lys221 each bind CTP; these read DYE and KTKPLQ. UTP-binding positions include 185–190 and Lys221; that span reads KTKPLQ. The region spanning 293–531 is the Glutamine amidotransferase type-1 domain; sequence CGKYVELPDA…LSAAVEQSRR (239 aa). Gly351 is an L-glutamine binding site. Cys378 serves as the catalytic Nucleophile; for glutamine hydrolysis. L-glutamine is bound by residues 379-382, Glu402, and Arg459; that span reads FGMQ. Active-site residues include His504 and Glu506.

It belongs to the CTP synthase family. As to quaternary structure, homotetramer.

It carries out the reaction UTP + L-glutamine + ATP + H2O = CTP + L-glutamate + ADP + phosphate + 2 H(+). It catalyses the reaction L-glutamine + H2O = L-glutamate + NH4(+). The enzyme catalyses UTP + NH4(+) + ATP = CTP + ADP + phosphate + 2 H(+). Its pathway is pyrimidine metabolism; CTP biosynthesis via de novo pathway; CTP from UDP: step 2/2. Allosterically activated by GTP, when glutamine is the substrate; GTP has no effect on the reaction when ammonia is the substrate. The allosteric effector GTP functions by stabilizing the protein conformation that binds the tetrahedral intermediate(s) formed during glutamine hydrolysis. Inhibited by the product CTP, via allosteric rather than competitive inhibition. Functionally, catalyzes the ATP-dependent amination of UTP to CTP with either L-glutamine or ammonia as the source of nitrogen. Regulates intracellular CTP levels through interactions with the four ribonucleotide triphosphates. In Pyrobaculum calidifontis (strain DSM 21063 / JCM 11548 / VA1), this protein is CTP synthase.